The following is a 1706-amino-acid chain: DDT domain-containing protein PTM (1706 aa).

Residues 1 to 16 show a composition bias toward basic residues; it reads MEAKVPRPRGRPRKRQ. Disordered regions lie at residues 1–27 and 144–168; these read MEAK…KLNN and VTNS…RGSD. The Nuclear localization signal motif lies at 9-18; that stretch reads RGRPRKRQRL. The segment covering 148–160 has biased composition (acidic residues); sequence EDGDSYSDSESSE. One can recognise a DDT domain in the interval 192 to 252; sequence EEAVAHLLSV…LRALKGHLER (61 aa). The segment covering 375 to 393 has biased composition (basic and acidic residues); it reads YKEKEVTDSSTNESKDLDS. The segment at 375-408 is disordered; the sequence is YKEKEVTDSSTNESKDLDSRCTNGGSNEVSSDLD. A compositionally biased stretch (polar residues) spans 394 to 408; sequence RCTNGGSNEVSSDLD. Residues 411–458 form a PHD-type 1 zinc finger; that stretch reads SDECRICGMDGTLLCCDGCPLAYHSRCIGVVKMYIPDGPWFCPECTIN. 2 disordered regions span residues 1165–1194 and 1311–1345; these read KPPS…SVSK and TNQK…PATP. 2 stretches are compositionally biased toward polar residues: residues 1167–1194 and 1311–1323; these read PSQQ…SVSK and TNQK…SGLD. A compositionally biased stretch (basic and acidic residues) spans 1325 to 1336; the sequence is DSERMSEQKDSK. 5 helical membrane passes run 1539 to 1559, 1569 to 1589, 1596 to 1616, 1624 to 1644, and 1682 to 1702; these read ALGS…SILP, LAGP…GLFL, ANDL…LGLI, AALH…WCGL, and MLGL…YVLI.

As to quaternary structure, interacts (via the DDT domain) with CHR11 (via C-terminus).

The protein resides in the plastid. It is found in the chloroplast outer membrane. The protein localises to the nucleus. In terms of biological role, membrane-bound transcription factor required for the plastid-to-nucleus retrograde signaling. Functions in multiple retrograde pathways. The plastid-to-nucleus signal plays an important role in the coordinated expression of both nuclear- and chloroplast-localized genes that encode photosynthesis-related proteins. In the nucleus, activates ABI4 transcription in a PHD-dependent manner associated with histone modifications. Localized primarily in the chloroplast outer membrane as dormant form and, in response to retrograde signals, is released from the membrane through proteolytic cleavage and its cleaved fragment containing the transcription factor domain is redistributed to the nucleus, where it regulates the expression of particular nuclear genes. The polypeptide is DDT domain-containing protein PTM (Arabidopsis thaliana (Mouse-ear cress)).